The sequence spans 265 residues: Non-seed lectin (265 aa).

A signal peptide (or 23) is located at residues 1-21; sequence MALYRTKELVSLVSIMFVLLA. N-linked (GlcNAc...) asparagine glycosylation is found at Asn-59 and Asn-127.

It belongs to the leguminous lectin family. Monomer. Most highly expressed in the epidermal layer of developing shoot tips.

In Pisum sativum (Garden pea), this protein is Non-seed lectin.